Reading from the N-terminus, the 677-residue chain is MVKGSLLNRNINALNCRCLAQKLTSWGLLNIRSIHADSNRGVVNSSNLIIIPPYKPKSKSVLRSPYLTSHYVDALAFKLVEDPTVHNTLEDVFQDIESYKPKSVNTSAKSFRQLVNTLEVAFRKEQLRKFAKVFHIKSSSLRKKEIIERILLDHWKLRIHGDAMDDMLAIKDVTLCPLEMFFLLLNNASALRDISQKHAAHVVINVTNNNIKIEAKKRDVAIVEELISGIFKHLKSKTIDVTEYYANIINKNAVLLSERCKAYIELSGKAQIKITTAFGNCSFDEIERKLLSFVMLFENTDKCLIDSECLTSKKSFTLNDFTYDFRLPWYLKDDSWKRWCRVKEYSWNTSVLSDEALTRNSLTLPVPIKPSINKDISSIEVKDLSQKNTTQSKKLNSYIRDSFHSVNDFWFSSHATNTEQCFTKRLTATFGYSLFSSSFLSHTKNPDVASFYVKERSKAHHFLFNTFVDQIPSYLKNHSILDETTRKSFYRIILSSNSLSTSLTYPLIEIILPIKNGFLMGKETFQIAFKKSRGYQILLPESELDLKINTTTFKTIANNKSVDAFLDDCVSFFSRPEMTQDSQLNASSGFLTNFSLKDSTDRFYKVLSYEKVSERFVKIDDSYITYSDIFSPLSHSHKDWFRIHTEENSSKNFYEIISEIVGGFPYYSQANERSLIS.

Residues 1–41 (MVKGSLLNRNINALNCRCLAQKLTSWGLLNIRSIHADSNRG) constitute a mitochondrion transit peptide.

It belongs to the SLS1 family. As to quaternary structure, component of the MRH5C complex, composed of mrh5, ppr4, mtf2, and sls1. Proteins mtf2 and sls1 form a subcomplex that serves as a scaffold to bring mrh5 and ppr4 together. The MRH5C complex associates with the small subunit of the mitochondrial ribosome.

It is found in the mitochondrion inner membrane. Translation activation factor that as part of the MRH5C complex specifically recruits cox1 mRNA to the mitochondrial ribosome for translation initiation. This is Mitochondrial translation factor sls1 (sls1) from Schizosaccharomyces pombe (strain 972 / ATCC 24843) (Fission yeast).